Consider the following 334-residue polypeptide: Rhomboid-like protein 14, mitochondrial (334 aa).

The transit peptide at 1–87 directs the protein to the mitochondrion; sequence MENFGEGRRS…RLFLSAFYHV (87 aa). Transmembrane regions (helical) follow at residues 114–134, 146–166, 176–196, and 197–217; these read EFASMVFTLIGMSQGVTLLLA, AYYNEYAVGFSGVLFAMKVVL, VYGILVPTKYAAWAELILVQM, and FVPNASFLGHLGGILAGIIYL. The active-site Nucleophile is serine 156. The Charge relay system role is filled by histidine 206. The RanBP2-type zinc finger occupies 273-302; that stretch reads GPGIWRCQSCTYDNSGWLSACEMCGSGRAR.

Belongs to the peptidase S54 family.

It is found in the mitochondrion membrane. Functionally, probable rhomboid-type serine protease that catalyzes intramembrane proteolysis. May function in the heat-shock response pathway. The sequence is that of Rhomboid-like protein 14, mitochondrial from Arabidopsis thaliana (Mouse-ear cress).